A 157-amino-acid chain; its full sequence is 3-hydroxyacyl-[acyl-carrier-protein] dehydratase FabZ (157 aa).

His-58 is a catalytic residue.

This sequence belongs to the thioester dehydratase family. FabZ subfamily.

Its subcellular location is the cytoplasm. It catalyses the reaction a (3R)-hydroxyacyl-[ACP] = a (2E)-enoyl-[ACP] + H2O. In terms of biological role, involved in unsaturated fatty acids biosynthesis. Catalyzes the dehydration of short chain beta-hydroxyacyl-ACPs and long chain saturated and unsaturated beta-hydroxyacyl-ACPs. The polypeptide is 3-hydroxyacyl-[acyl-carrier-protein] dehydratase FabZ (Rhizorhabdus wittichii (strain DSM 6014 / CCUG 31198 / JCM 15750 / NBRC 105917 / EY 4224 / RW1) (Sphingomonas wittichii)).